The following is a 268-amino-acid chain: Small ribosomal subunit protein uS3 (268 aa).

The KH type-2 domain maps to 38–106 (IRKLLATGME…QVQLNILEVK (69 aa)). The interval 217–268 (NTAAPAGDRPRRERPSRPRRSGATGTTATSTEAGRAATATADAPATEQNQEG) is disordered. Residues 237–268 (SGATGTTATSTEAGRAATATADAPATEQNQEG) show a composition bias toward low complexity.

Belongs to the universal ribosomal protein uS3 family. As to quaternary structure, part of the 30S ribosomal subunit. Forms a tight complex with proteins S10 and S14.

In terms of biological role, binds the lower part of the 30S subunit head. Binds mRNA in the 70S ribosome, positioning it for translation. In Rhodococcus erythropolis (strain PR4 / NBRC 100887), this protein is Small ribosomal subunit protein uS3.